The following is a 320-amino-acid chain: Lipoyl synthase (320 aa).

Residues cysteine 67, cysteine 72, cysteine 78, cysteine 93, cysteine 97, cysteine 100, and serine 307 each coordinate [4Fe-4S] cluster. Residues 79-296 (FNHGTATFMI…RDKANEMGFE (218 aa)) form the Radical SAM core domain.

This sequence belongs to the radical SAM superfamily. Lipoyl synthase family. The cofactor is [4Fe-4S] cluster.

Its subcellular location is the cytoplasm. The catalysed reaction is [[Fe-S] cluster scaffold protein carrying a second [4Fe-4S](2+) cluster] + N(6)-octanoyl-L-lysyl-[protein] + 2 oxidized [2Fe-2S]-[ferredoxin] + 2 S-adenosyl-L-methionine + 4 H(+) = [[Fe-S] cluster scaffold protein] + N(6)-[(R)-dihydrolipoyl]-L-lysyl-[protein] + 4 Fe(3+) + 2 hydrogen sulfide + 2 5'-deoxyadenosine + 2 L-methionine + 2 reduced [2Fe-2S]-[ferredoxin]. Its pathway is protein modification; protein lipoylation via endogenous pathway; protein N(6)-(lipoyl)lysine from octanoyl-[acyl-carrier-protein]: step 2/2. In terms of biological role, catalyzes the radical-mediated insertion of two sulfur atoms into the C-6 and C-8 positions of the octanoyl moiety bound to the lipoyl domains of lipoate-dependent enzymes, thereby converting the octanoylated domains into lipoylated derivatives. The protein is Lipoyl synthase of Haemophilus influenzae (strain ATCC 51907 / DSM 11121 / KW20 / Rd).